We begin with the raw amino-acid sequence, 427 residues long: Inward rectifier potassium channel 2 (427 aa).

Over 1–81 (MGSVRTNRYS…IFTTCVDIRW (81 aa)) the chain is Cytoplasmic. The residue at position 76 (Cys76) is an S-nitrosocysteine. A helical transmembrane segment spans residues 82 to 106 (RWMLVIFCLAFVLSWLFFGCVFWLI). Over 107 to 128 (ALLHGDLDASKESKACVSEVNS) the chain is Extracellular. An intramembrane region (helical; Pore-forming) is located at residues 129 to 140 (FTAAFLFSIETQ). The pore-forming intramembrane region spans 141–147 (TTIGYGF). Positions 142 to 147 (TIGYGF) match the Selectivity filter motif. The Extracellular portion of the chain corresponds to 148 to 156 (RCVTDECPV). Residues 157–178 (AVFMVVFQSIVGCIIDAFIIGA) form a helical membrane-spanning segment. The Cytoplasmic portion of the chain corresponds to 179–427 (VMAKMAKPKK…PRPLRRESEI (249 aa)). Residues 181 to 208 (AKMAKPKKRNETLVFSHNAVIAMRDGKL) are polyphosphoinositide (PIP2)-binding. Residues 384-427 (SKEEDDSENGVPESTSTDTPPDIDLHNQASVPLEPRPLRRESEI) are disordered. The PDZ-binding motif lies at 425-427 (SEI).

The protein belongs to the inward rectifier-type potassium channel (TC 1.A.2.1) family. KCNJ2 subfamily. Homotetramer. Homomultimeric and heteromultimeric association with KCNJ4/Kir2.3. Can form heteromeric channels with Kir2.6/KCNJ18. Associates, via its PDZ-recognition domain, with a complex containing LIN7A, LIN7B, LIN7C, DLG1, CASK and APBA1. Post-translationally, S-nitrosylation increases the open probability and inward rectifying currents.

The protein localises to the cell membrane. The protein resides in the sarcolemma. It localises to the T-tubule. The catalysed reaction is K(+)(in) = K(+)(out). Activated by phosphatidylinositol 4,5 biphosphate (PtdIns(4,5)P2). Inward rectifier potassium channels are characterized by a greater tendency to allow potassium to flow into the cell rather than out of it. Their voltage dependence is regulated by the concentration of extracellular potassium; as external potassium is raised, the voltage range of the channel opening shifts to more positive voltages. The inward rectification is mainly due to the blockage of outward current by internal magnesium. Can be blocked by extracellular barium and cesium. Probably participates in establishing action potential waveform and excitability of neuronal and muscle tissues. In Bos taurus (Bovine), this protein is Inward rectifier potassium channel 2 (KCNJ2).